The following is a 344-amino-acid chain: Type II methyltransferase M.FnuDI (344 aa).

Residues 1 to 330 form the SAM-dependent MTase C5-type domain; that stretch reads MKLLSLFSGA…KRIKETLTDK (330 aa). The active site involves C71.

It belongs to the class I-like SAM-binding methyltransferase superfamily. C5-methyltransferase family.

The enzyme catalyses a 2'-deoxycytidine in DNA + S-adenosyl-L-methionine = a 5-methyl-2'-deoxycytidine in DNA + S-adenosyl-L-homocysteine + H(+). A methylase, recognizes the double-stranded sequence 5'-GGCC-3', methylates C-? on both strands, and protects the DNA from cleavage by the FnuDI endonuclease. This is Type II methyltransferase M.FnuDI (fnuDIM) from Fusobacterium nucleatum.